A 230-amino-acid polypeptide reads, in one-letter code: Biosynthetic peptidoglycan transglycosylase (230 aa).

Residues 11-31 (VLLVLVALFVLYQLWIFTLVL) form a helical membrane-spanning segment.

This sequence belongs to the glycosyltransferase 51 family.

It is found in the cell inner membrane. The catalysed reaction is [GlcNAc-(1-&gt;4)-Mur2Ac(oyl-L-Ala-gamma-D-Glu-L-Lys-D-Ala-D-Ala)](n)-di-trans,octa-cis-undecaprenyl diphosphate + beta-D-GlcNAc-(1-&gt;4)-Mur2Ac(oyl-L-Ala-gamma-D-Glu-L-Lys-D-Ala-D-Ala)-di-trans,octa-cis-undecaprenyl diphosphate = [GlcNAc-(1-&gt;4)-Mur2Ac(oyl-L-Ala-gamma-D-Glu-L-Lys-D-Ala-D-Ala)](n+1)-di-trans,octa-cis-undecaprenyl diphosphate + di-trans,octa-cis-undecaprenyl diphosphate + H(+). Its pathway is cell wall biogenesis; peptidoglycan biosynthesis. Peptidoglycan polymerase that catalyzes glycan chain elongation from lipid-linked precursors. The chain is Biosynthetic peptidoglycan transglycosylase from Aromatoleum aromaticum (strain DSM 19018 / LMG 30748 / EbN1) (Azoarcus sp. (strain EbN1)).